A 186-amino-acid polypeptide reads, in one-letter code: Iodotyrosine deiodinase (186 aa).

FMN contacts are provided by residues 11–15 (RKTVR), 38–39 (PS), and serine 39. 3-iodo-L-tyrosine-binding residues include methionine 41, glutamate 68, tyrosine 72, and lysine 92. L-tyrosine is bound by residues methionine 41, glutamate 68, tyrosine 72, and lysine 92. Residue arginine 176 participates in FMN binding.

Belongs to the nitroreductase family. Homodimer. Requires FMN as cofactor.

The enzyme catalyses 2 iodide + L-tyrosine + 2 NADP(+) = 3,5-diiodo-L-tyrosine + 2 NADPH + H(+). It catalyses the reaction iodide + L-tyrosine + NADP(+) = 3-iodo-L-tyrosine + NADPH. It carries out the reaction 3-iodo-L-tyrosine + iodide + NADP(+) = 3,5-diiodo-L-tyrosine + NADPH + H(+). The catalysed reaction is L-tyrosine + chloride + NADP(+) = 3-chloro-L-tyrosine + NADPH. The enzyme catalyses bromide + L-tyrosine + NADP(+) = 3-bromo-L-tyrosine + NADPH. In terms of biological role, catalyzes the dehalogenation of halotyrosines such as 3-bromo-L-tyrosine, 3-chloro-L-tyrosine, 3-iodo-L-tyrosine and 3,5-diiodo-L-tyrosine. Activity towards 2-iodophenol is weak. This Thermotoga neapolitana (strain ATCC 49049 / DSM 4359 / NBRC 107923 / NS-E) protein is Iodotyrosine deiodinase.